The sequence spans 305 residues: Aspartate carbamoyltransferase catalytic subunit (305 aa).

Carbamoyl phosphate is bound by residues Arg56 and Thr57. Lys85 is an L-aspartate binding site. Carbamoyl phosphate-binding residues include Arg106, His134, and Gln137. L-aspartate contacts are provided by Arg167 and Arg227. Residues Leu266 and Pro267 each contribute to the carbamoyl phosphate site.

It belongs to the aspartate/ornithine carbamoyltransferase superfamily. ATCase family. As to quaternary structure, heterooligomer of catalytic and regulatory chains.

It catalyses the reaction carbamoyl phosphate + L-aspartate = N-carbamoyl-L-aspartate + phosphate + H(+). It functions in the pathway pyrimidine metabolism; UMP biosynthesis via de novo pathway; (S)-dihydroorotate from bicarbonate: step 2/3. Catalyzes the condensation of carbamoyl phosphate and aspartate to form carbamoyl aspartate and inorganic phosphate, the committed step in the de novo pyrimidine nucleotide biosynthesis pathway. This chain is Aspartate carbamoyltransferase catalytic subunit, found in Thermoplasma acidophilum (strain ATCC 25905 / DSM 1728 / JCM 9062 / NBRC 15155 / AMRC-C165).